Here is a 93-residue protein sequence, read N- to C-terminus: SH3 domain-binding glutamic acid-rich-like protein 3 (93 aa).

At Ser2 the chain carries N-acetylserine. The region spanning 2-93 (SGLRVYSTSV…NTLQEFLKLA (92 aa)) is the Glutaredoxin domain. The O-linked (GalNAc...) threonine glycan is linked to Thr9.

The protein belongs to the SH3BGR family. As to quaternary structure, interacts with MYO1C (via its IQ motifs); the interaction is dependent on calcium and takes place at membrane ruffles. In terms of processing, may be glycosylated. Expressed in heart, liver, lung, kidney, spleen, thymus, ovarian follicles, skeletal muscle, brain, lymph node and mammary epithelial and stromal cells (at protein level).

It is found in the cytoplasm. The protein localises to the cytosol. Its subcellular location is the cell projection. The protein resides in the ruffle membrane. It localises to the nucleus. In terms of biological role, could act as a modulator of glutaredoxin biological activity. May play a role in cytoskeleton organization. In Rattus norvegicus (Rat), this protein is SH3 domain-binding glutamic acid-rich-like protein 3.